We begin with the raw amino-acid sequence, 150 residues long: Large ribosomal subunit protein uL13 (150 aa).

It belongs to the universal ribosomal protein uL13 family. Part of the 50S ribosomal subunit.

Functionally, this protein is one of the early assembly proteins of the 50S ribosomal subunit, although it is not seen to bind rRNA by itself. It is important during the early stages of 50S assembly. The chain is Large ribosomal subunit protein uL13 from Chlamydia caviae (strain ATCC VR-813 / DSM 19441 / 03DC25 / GPIC) (Chlamydophila caviae).